A 339-amino-acid polypeptide reads, in one-letter code: Serine/threonine-protein kinase SAPK2 (339 aa).

Residues Tyr4–Phe260 enclose the Protein kinase domain. Residues Ile10 to Ala18 and Lys33 contribute to the ATP site. Catalysis depends on Asp123, which acts as the Proton acceptor. A C-terminal region spans residues Glu253–Leu339.

Belongs to the protein kinase superfamily. Ser/Thr protein kinase family. Phosphorylated.

It carries out the reaction L-seryl-[protein] + ATP = O-phospho-L-seryl-[protein] + ADP + H(+). The enzyme catalyses L-threonyl-[protein] + ATP = O-phospho-L-threonyl-[protein] + ADP + H(+). May play a role in signal transduction of hyperosmotic response. Can phosphorylate BZIP46 in vitro. In Oryza sativa subsp. indica (Rice), this protein is Serine/threonine-protein kinase SAPK2 (SAPK2).